We begin with the raw amino-acid sequence, 189 residues long: Elongation factor P (189 aa).

It belongs to the elongation factor P family.

It localises to the cytoplasm. Its pathway is protein biosynthesis; polypeptide chain elongation. Involved in peptide bond synthesis. Stimulates efficient translation and peptide-bond synthesis on native or reconstituted 70S ribosomes in vitro. Probably functions indirectly by altering the affinity of the ribosome for aminoacyl-tRNA, thus increasing their reactivity as acceptors for peptidyl transferase. The protein is Elongation factor P of Aster yellows witches'-broom phytoplasma (strain AYWB).